The chain runs to 493 residues: Serine/threonine-protein kinase 3 (493 aa).

A Protein kinase domain is found at Phe-26–Ile-277. ATP contacts are provided by residues Leu-32–Val-40 and Lys-55. The Proton acceptor role is filled by Asp-145. A Phosphothreonine; by autocatalysis modification is found at Thr-179. A coiled-coil region spans residues Leu-286 to Lys-327. 2 disordered regions span residues Glu-303–Met-336 and Asp-369–Gln-414. Over residues Leu-308–Leu-320 the composition is skewed to acidic residues. Positions Met-325 to Met-336 are enriched in polar residues. The segment covering Asp-369–Asp-378 has biased composition (acidic residues). Over residues Tyr-398 to Asp-410 the composition is skewed to basic and acidic residues. Residues Phe-439–Lys-486 enclose the SARAH domain. Residues Asn-444 to Gln-477 are a coiled coil.

Belongs to the protein kinase superfamily. STE Ser/Thr protein kinase family. STE20 subfamily. Homodimer; mediated via the coiled-coil region. Mg(2+) is required as a cofactor.

The protein resides in the cytoplasm. The protein localises to the nucleus. It catalyses the reaction L-seryl-[protein] + ATP = O-phospho-L-seryl-[protein] + ADP + H(+). The enzyme catalyses L-threonyl-[protein] + ATP = O-phospho-L-threonyl-[protein] + ADP + H(+). Inhibited by the C-terminal non-catalytic region. Activated by caspase-cleavage. Full activation also requires homodimerization and autophosphorylation of Thr-179. Functionally, stress-activated, pro-apoptotic kinase which, following caspase-cleavage, enters the nucleus and induces chromatin condensation followed by internucleosomal DNA fragmentation. Key component of the Hippo signaling pathway which plays a pivotal role in organ size control and tumor suppression by restricting proliferation and promoting apoptosis. The core of this pathway is composed of a kinase cascade wherein stk3/mst2 and stk4/mst1, in complex with its regulatory protein sav1, phosphorylates and activates lats1/2 in complex with its regulatory protein mob1, which in turn phosphorylates and inactivates yap1 oncoprotein and wwtr1/taz. Phosphorylation of yap1 by lats2 inhibits its translocation into the nucleus to regulate cellular genes important for cell proliferation, cell death, and cell migration. This Xenopus laevis (African clawed frog) protein is Serine/threonine-protein kinase 3 (stk3).